Here is a 264-residue protein sequence, read N- to C-terminus: uncharacterized protein (264 aa).

The helical transmembrane segment at 9-29 threads the bilayer; it reads LVISILSLIATLSISFNIYFI.

The protein resides in the membrane. This is an uncharacterized protein from Ureaplasma parvum serovar 3 (strain ATCC 700970).